Here is a 118-residue protein sequence, read N- to C-terminus: Immunoglobulin heavy variable 3-9 (118 aa).

The N-terminal stretch at 1–19 (MELGLSWIFLLAILKGVQC) is a signal peptide. Positions 20-44 (EVQLVESGGGLVQPGRSLRLSCAAS) are framework-1. Positions 20 to 118 (EVQLVESGGG…DTALYYCAKD (99 aa)) constitute an Ig-like domain. An intrachain disulfide couples cysteine 41 to cysteine 115. The tract at residues 45–52 (GFTFDDYA) is complementarity-determining-1. A framework-2 region spans residues 53-69 (MHWVRQAPGKGLEWVSG). The tract at residues 70–77 (ISWNSGSI) is complementarity-determining-2. The framework-3 stretch occupies residues 78-115 (GYADSVKGRFTISRDNAKNSLYLQMNSLRAEDTALYYC). A complementarity-determining-3 region spans residues 116 to 118 (AKD).

Immunoglobulins are composed of two identical heavy chains and two identical light chains; disulfide-linked.

It localises to the secreted. Its subcellular location is the cell membrane. Its function is as follows. V region of the variable domain of immunoglobulin heavy chains that participates in the antigen recognition. Immunoglobulins, also known as antibodies, are membrane-bound or secreted glycoproteins produced by B lymphocytes. In the recognition phase of humoral immunity, the membrane-bound immunoglobulins serve as receptors which, upon binding of a specific antigen, trigger the clonal expansion and differentiation of B lymphocytes into immunoglobulins-secreting plasma cells. Secreted immunoglobulins mediate the effector phase of humoral immunity, which results in the elimination of bound antigens. The antigen binding site is formed by the variable domain of one heavy chain, together with that of its associated light chain. Thus, each immunoglobulin has two antigen binding sites with remarkable affinity for a particular antigen. The variable domains are assembled by a process called V-(D)-J rearrangement and can then be subjected to somatic hypermutations which, after exposure to antigen and selection, allow affinity maturation for a particular antigen. In Homo sapiens (Human), this protein is Immunoglobulin heavy variable 3-9.